Consider the following 524-residue polypeptide: MIFKKRKGQLTLEFILLILGMTVVGIVITMGLVEKSPIFIGDKPLEVKKETMGLFINESKFNLTVENTTISNLGNNNTESNNSNNETGGGYLYIRVSGSSKGLITKDLIVSGDAKDVSGDISKTINSKCVEENAIGEVYGDIYLEGSANYKLGNLLCINKFQTYLTGSGSLKVYVPYIQEFIIRDKNSGESQIGGSVSLTVGNTNINRFYVEKITGGAKVKFKDFAINTFETNSGNFGGGAETVFENGRISTMKLGDIVSGGNVKFKNVNIGNMIINNMIGSPTFELSNSTINNMKINKLIGSPKILVEDSSIINSLETDQLGGSDIEVKDGSIIKEITIHGSTGTNGKIFVGYGGKVEKLFVEGNINSRIDLKGFSGLIDVSIGNIAGGGKLYVDNVIGNSISTGIIGNNKGLEIEDSSLSVVNIEGVSNSGSAFIKNTLIYQLKINSLPDWGSDMTLNKVNITKLSINEIRNGKLTIKNSEIGELHITKISGKGKIIVKKSYVNGKYYKKLVIKKSNYKKWS.

The chain crosses the membrane as a helical span at residues 13 to 33; it reads EFILLILGMTVVGIVITMGLV.

Its subcellular location is the membrane. This is an uncharacterized protein from Methanocaldococcus jannaschii (strain ATCC 43067 / DSM 2661 / JAL-1 / JCM 10045 / NBRC 100440) (Methanococcus jannaschii).